The following is a 130-amino-acid chain: Large ribosomal subunit protein bL12 (130 aa).

This sequence belongs to the bacterial ribosomal protein bL12 family. In terms of assembly, homodimer. Part of the ribosomal stalk of the 50S ribosomal subunit. Forms a multimeric L10(L12)X complex, where L10 forms an elongated spine to which 2 to 4 L12 dimers bind in a sequential fashion. Binds GTP-bound translation factors.

In terms of biological role, forms part of the ribosomal stalk which helps the ribosome interact with GTP-bound translation factors. Is thus essential for accurate translation. The chain is Large ribosomal subunit protein bL12 from Parafrankia sp. (strain EAN1pec).